We begin with the raw amino-acid sequence, 65 residues long: UPF0434 protein PSHAa1659 (65 aa).

It belongs to the UPF0434 family.

This is UPF0434 protein PSHAa1659 from Pseudoalteromonas translucida (strain TAC 125).